The sequence spans 540 residues: MSSFDPPNHRYSALVLILLLLGFSVAAADDVSWTEDSSLESPGCTNKFQMVKVLNWVDGVEGDFLTGLTAQFGAALPSVPDQALRFPAAFVDPLDSCSHLSSRLDGHIALSIRGNCAFTEKAKHAEAAGASALLVINDKEDLDEMGCMEKDTSLNVSIPVLMISKSSGDALNKSMVDNKNVELLLYAPKRPAVDLTAGLLLLMAVGTVVVASLWSELTDPDQANESYSILAKDVSSAGTRKDDPEKEILDISVTGAVFFIVTASIFLLLLFYFMSSWFVWVLTIFFCIGGMQGMHNIIMAVILRKCRHLARKSVKLPLLGTMSVLSLLVNIVCLAFAVFWFIKRHTSYSWVGQDILGICLMITALQVVRLPNIKVATVLLCCAFVYDIFWVFISPLIFHESVMIVVAQGDSSTGESIPMLLRIPRFFDPWGGYDMIGFGDILFPGLLISFASRYDKIKKRVISNGYFLWLTIGYGIGLLLTYLGLYLMDGHGQPALLYIVPCTLGLAVILGLVRGELKELWNYGIEESESHTPEDPMPVA.

The N-terminal stretch at 1-28 is a signal peptide; that stretch reads MSSFDPPNHRYSALVLILLLLGFSVAAA. At 29-194 the chain is on the lumenal side; sequence DDVSWTEDSS…LYAPKRPAVD (166 aa). Residues 98 to 172 enclose the PA domain; that stretch reads SHLSSRLDGH…ISKSSGDALN (75 aa). N-linked (GlcNAc...) asparagine glycosylation is found at Asn-155 and Asn-172. A helical transmembrane segment spans residues 195–215; the sequence is LTAGLLLLMAVGTVVVASLWS. Topologically, residues 216–250 are cytoplasmic; it reads ELTDPDQANESYSILAKDVSSAGTRKDDPEKEILD. A helical transmembrane segment spans residues 251 to 273; that stretch reads ISVTGAVFFIVTASIFLLLLFYF. Over 274-276 the chain is Lumenal; the sequence is MSS. The chain crosses the membrane as a helical span at residues 277 to 299; sequence WFVWVLTIFFCIGGMQGMHNIIM. Residues 300-321 lie on the Cytoplasmic side of the membrane; the sequence is AVILRKCRHLARKSVKLPLLGT. Residues 322 to 342 form a helical membrane-spanning segment; it reads MSVLSLLVNIVCLAFAVFWFI. Topologically, residues 343–347 are lumenal; it reads KRHTS. A helical membrane pass occupies residues 348 to 368; sequence YSWVGQDILGICLMITALQVV. Residues 369-377 are Cytoplasmic-facing; the sequence is RLPNIKVAT. A helical membrane pass occupies residues 378–398; it reads VLLCCAFVYDIFWVFISPLIF. The active site involves Asp-387. The Lumenal portion of the chain corresponds to 399-429; it reads HESVMIVVAQGDSSTGESIPMLLRIPRFFDP. A helical transmembrane segment spans residues 430-450; the sequence is WGGYDMIGFGDILFPGLLISF. Asp-440 is a catalytic residue. Over 451-466 the chain is Cytoplasmic; that stretch reads ASRYDKIKKRVISNGY. A helical transmembrane segment spans residues 467–487; the sequence is FLWLTIGYGIGLLLTYLGLYL. Residues 488 to 492 lie on the Lumenal side of the membrane; it reads MDGHG. A helical membrane pass occupies residues 493 to 513; sequence QPALLYIVPCTLGLAVILGLV. Positions 494-496 match the PAL motif; that stretch reads PAL. The Cytoplasmic segment spans residues 514-540; sequence RGELKELWNYGIEESESHTPEDPMPVA.

This sequence belongs to the peptidase A22B family. Post-translationally, glycosylated. As to expression, ubiquitous.

Its subcellular location is the endosome membrane. Functionally, intramembrane-cleaving aspartic protease (I-CLiP) that cleaves type II membrane signal peptides in the hydrophobic plane of the membrane. This is Signal peptide peptidase-like 3 (SPPL3) from Arabidopsis thaliana (Mouse-ear cress).